We begin with the raw amino-acid sequence, 106 residues long: Thioredoxin-like protein YdbP (106 aa).

The Thioredoxin domain maps to 1 to 106 (MKKITTNEQF…VTEFLSEHIS (106 aa)). C29 and C32 form a disulfide bridge.

This sequence belongs to the thioredoxin family.

Participates in various redox reactions through the reversible oxidation of its active center dithiol to a disulfide and catalyzes dithiol-disulfide exchange reactions. The polypeptide is Thioredoxin-like protein YdbP (ydbP) (Bacillus subtilis (strain 168)).